Here is a 154-residue protein sequence, read N- to C-terminus: MKILGIDPGTRNCGYAIVEKNGRDLKLIEAGLIKIKTKILQEQIVEMTEGLDLLFKNHKIDQVSIEDMFYAFNPKTVIKLAQFRGAISLKILQEFGNFSEYTPLQVKQAVTGNGKATKEQVAFMVKRLLNVKKEIKPLDITDAIAIALTHAQRL.

Catalysis depends on residues Asp7, Glu66, and Asp139. Mg(2+)-binding residues include Asp7, Glu66, and Asp139.

It belongs to the RuvC family. Homodimer which binds Holliday junction (HJ) DNA. The HJ becomes 2-fold symmetrical on binding to RuvC with unstacked arms; it has a different conformation from HJ DNA in complex with RuvA. In the full resolvosome a probable DNA-RuvA(4)-RuvB(12)-RuvC(2) complex forms which resolves the HJ. Mg(2+) serves as cofactor.

It is found in the cytoplasm. It carries out the reaction Endonucleolytic cleavage at a junction such as a reciprocal single-stranded crossover between two homologous DNA duplexes (Holliday junction).. The RuvA-RuvB-RuvC complex processes Holliday junction (HJ) DNA during genetic recombination and DNA repair. Endonuclease that resolves HJ intermediates. Cleaves cruciform DNA by making single-stranded nicks across the HJ at symmetrical positions within the homologous arms, yielding a 5'-phosphate and a 3'-hydroxyl group; requires a central core of homology in the junction. The consensus cleavage sequence is 5'-(A/T)TT(C/G)-3'. Cleavage occurs on the 3'-side of the TT dinucleotide at the point of strand exchange. HJ branch migration catalyzed by RuvA-RuvB allows RuvC to scan DNA until it finds its consensus sequence, where it cleaves and resolves the cruciform DNA. The polypeptide is Crossover junction endodeoxyribonuclease RuvC (Aliarcobacter butzleri (strain RM4018) (Arcobacter butzleri)).